Reading from the N-terminus, the 335-residue chain is Glycerol-3-phosphate dehydrogenase [NAD(P)+] (335 aa).

NADPH-binding residues include Ser-12, Trp-13, and Lys-107. Sn-glycerol 3-phosphate-binding residues include Lys-107, Gly-138, and Ser-140. Position 142 (Ala-142) interacts with NADPH. Residues Lys-193, Asp-246, Ser-256, Arg-257, and Asn-258 each contribute to the sn-glycerol 3-phosphate site. Catalysis depends on Lys-193, which acts as the Proton acceptor. Position 257 (Arg-257) interacts with NADPH. Residues Val-281 and Glu-283 each coordinate NADPH.

Belongs to the NAD-dependent glycerol-3-phosphate dehydrogenase family.

The protein resides in the cytoplasm. The enzyme catalyses sn-glycerol 3-phosphate + NAD(+) = dihydroxyacetone phosphate + NADH + H(+). It carries out the reaction sn-glycerol 3-phosphate + NADP(+) = dihydroxyacetone phosphate + NADPH + H(+). The protein operates within membrane lipid metabolism; glycerophospholipid metabolism. Its function is as follows. Catalyzes the reduction of the glycolytic intermediate dihydroxyacetone phosphate (DHAP) to sn-glycerol 3-phosphate (G3P), the key precursor for phospholipid synthesis. In Geobacter sp. (strain M21), this protein is Glycerol-3-phosphate dehydrogenase [NAD(P)+].